Reading from the N-terminus, the 148-residue chain is MDSYSITNVKYLDPTELHRWMQEGHTTTLREPFQVVDVRGSDYMGGHIKDGWHYAYSRLKQDPEYLRELKHRLLEKQADGRGALNVIFHCMLSQQRGPSAAMLLLRSLDTAELSRCRLWVLRGGFSRWQSVYGDDESVTAGYLPDLWR.

Methionine 1 carries the post-translational modification N-acetylmethionine. In terms of domain architecture, Rhodanese spans 29–137; sequence LREPFQVVDV…WQSVYGDDES (109 aa).

This sequence belongs to the MPI phosphatase family.

Its subcellular location is the cytoplasm. The protein localises to the nucleus. Its function is as follows. Protein phosphatase. This Saccharomyces cerevisiae (strain ATCC 204508 / S288c) (Baker's yeast) protein is CDC25-like phosphatase YCH1 (YCH1).